We begin with the raw amino-acid sequence, 267 residues long: Undecaprenyl-diphosphatase (267 aa).

Transmembrane regions (helical) follow at residues 4–24 (LYAL…ISST), 41–61 (FWKS…IFVF), 69–89 (LDIW…GLFV), 96–116 (LFNG…FILI), 173–193 (AAEF…AYSI), 207–227 (IPLG…IKFF), and 239–259 (FGIY…SGIL).

Belongs to the UppP family.

It is found in the cell inner membrane. It carries out the reaction di-trans,octa-cis-undecaprenyl diphosphate + H2O = di-trans,octa-cis-undecaprenyl phosphate + phosphate + H(+). In terms of biological role, catalyzes the dephosphorylation of undecaprenyl diphosphate (UPP). Confers resistance to bacitracin. The chain is Undecaprenyl-diphosphatase from Campylobacter jejuni subsp. jejuni serotype O:2 (strain ATCC 700819 / NCTC 11168).